A 243-amino-acid chain; its full sequence is MAIYLTELSPETLTFPSPFTALDDPNGLLAFGGDLRLERIWAAYQQGIFPWYGPEDPILWWSPSPRAVFDPTRFQPAKSVKKFQRKHQYRVSVNHATSQVIEQCALTRPADQRWLNDSMRHAYGELAKQGRCHSVEVWQGEQLVGGLYGISVGQLFCGESMFSLATNASKIALWYFCDHFSRHQGQLIDCQVMNPHLQSLGATTLSREQFIQSLLSFKEKQVLSGCFETQWLATPTSPCAFED.

The protein belongs to the L/F-transferase family.

It is found in the cytoplasm. It carries out the reaction N-terminal L-lysyl-[protein] + L-leucyl-tRNA(Leu) = N-terminal L-leucyl-L-lysyl-[protein] + tRNA(Leu) + H(+). It catalyses the reaction N-terminal L-arginyl-[protein] + L-leucyl-tRNA(Leu) = N-terminal L-leucyl-L-arginyl-[protein] + tRNA(Leu) + H(+). The catalysed reaction is L-phenylalanyl-tRNA(Phe) + an N-terminal L-alpha-aminoacyl-[protein] = an N-terminal L-phenylalanyl-L-alpha-aminoacyl-[protein] + tRNA(Phe). Functions in the N-end rule pathway of protein degradation where it conjugates Leu, Phe and, less efficiently, Met from aminoacyl-tRNAs to the N-termini of proteins containing an N-terminal arginine or lysine. In Vibrio cholerae serotype O1 (strain ATCC 39315 / El Tor Inaba N16961), this protein is Leucyl/phenylalanyl-tRNA--protein transferase.